Here is a 92-residue protein sequence, read N- to C-terminus: Large ribosomal subunit protein bL27 (92 aa).

The disordered stretch occupies residues 1 to 20 (MAHKKAGGSTRNGRDSNPKY).

The protein belongs to the bacterial ribosomal protein bL27 family.

This chain is Large ribosomal subunit protein bL27, found in Legionella pneumophila (strain Paris).